A 613-amino-acid chain; its full sequence is Autophagy-related protein 22-2 (613 aa).

The disordered stretch occupies residues 1 to 30 (MAFNSTPPVSPGGEAQQRPPRFPGEDTTPT). A helical transmembrane segment spans residues 41-61 (YGIAAEVFAVCGVGSFLPLTL). An N-linked (GlcNAc...) asparagine glycan is attached at asparagine 90. Transmembrane regions (helical) follow at residues 120-140 (SFAMYTFSLAVLVQALTLISF), 167-187 (LFIFIAPPVYILASLLVVVGV), 189-209 (CLGSSFVVLNSFLPVLVANDP), 278-298 (VGLGYCAAVLVQILSILMLFA), 307-327 (ISGTLPLRFVLLLVGIWWFSF), 382-402 (VIIFLIAWFLLSDAMATVSGT), and 418-438 (VGLLSITATLSGMAGAFLWPV). Asparagine 448 carries an N-linked (GlcNAc...) asparagine glycan. Transmembrane regions (helical) follow at residues 453–473 (LCIALFEVIPLYGMLAYIPLF), 477–497 (GVVGLQQPWEIFPLGIVHGLV), 508–528 (FFGLLIPPGSEAAFYALYAAT), and 553–573 (GFFFIAVLILLPIPLIWMVNA). The disordered stretch occupies residues 592–613 (REHASEYGGPSEEAEGLLARDI).

It belongs to the ATG22 family.

The protein resides in the vacuole membrane. In terms of biological role, vacuolar effluxer which mediate the efflux of amino acids resulting from autophagic degradation. The release of autophagic amino acids allows the maintenance of protein synthesis and viability during nitrogen starvation. This Aspergillus fumigatus (strain ATCC MYA-4609 / CBS 101355 / FGSC A1100 / Af293) (Neosartorya fumigata) protein is Autophagy-related protein 22-2 (atg22-2).